A 132-amino-acid polypeptide reads, in one-letter code: Small ribosomal subunit protein uS8 (132 aa).

This sequence belongs to the universal ribosomal protein uS8 family. As to quaternary structure, part of the 30S ribosomal subunit. Contacts proteins S5 and S12.

One of the primary rRNA binding proteins, it binds directly to 16S rRNA central domain where it helps coordinate assembly of the platform of the 30S subunit. The chain is Small ribosomal subunit protein uS8 from Saccharopolyspora erythraea (strain ATCC 11635 / DSM 40517 / JCM 4748 / NBRC 13426 / NCIMB 8594 / NRRL 2338).